The sequence spans 234 residues: MFSQIVLLLSAFIYVVSATARRGTIKGRLDLAASNITGFVSTRTSFKLYQIGNFSTEYPYTSTTMFQDDEGNFEFANLPLNDGVNETTYYVMYPASMDFNLKPNRILIEFKNLENGTLQLNAFKNFFGREYFPSKDITYPEKLQSMKVHPYITVELLHKAPIRSYLQARNVSIFSTGIVGNILNSRWKLAGVITLIALVVFPIIVEKLDPETARAIREEAKRKQREKYAAVASK.

A signal peptide spans 1–18; the sequence is MFSQIVLLLSAFIYVVSA. Residues 19–188 lie on the Lumenal side of the membrane; it reads TARRGTIKGR…VGNILNSRWK (170 aa). Residues N35, N53, N85, N115, and N170 are each glycosylated (N-linked (GlcNAc...) asparagine). A helical membrane pass occupies residues 189–209; the sequence is LAGVITLIALVVFPIIVEKLD. Residues 210–234 are Cytoplasmic-facing; that stretch reads PETARAIREEAKRKQREKYAAVASK.

The protein belongs to the SOP4 family.

The protein resides in the endoplasmic reticulum membrane. Functionally, involved in the export of PMA1, possibly through the monitoring or assisting of PMA1 folding and acquisition of competence to enter vesicles. The protein is Protein SOP4 (SOP4) of Saccharomyces cerevisiae (strain YJM789) (Baker's yeast).